The primary structure comprises 316 residues: Sulfate adenylyltransferase subunit 2 (316 aa).

Positions 297–316 (RAIDRDQSGSMEKKKREGYF) are disordered.

Belongs to the PAPS reductase family. CysD subfamily. In terms of assembly, heterodimer composed of CysD, the smaller subunit, and CysN.

The catalysed reaction is sulfate + ATP + H(+) = adenosine 5'-phosphosulfate + diphosphate. It participates in sulfur metabolism; hydrogen sulfide biosynthesis; sulfite from sulfate: step 1/3. In terms of biological role, with CysN forms the ATP sulfurylase (ATPS) that catalyzes the adenylation of sulfate producing adenosine 5'-phosphosulfate (APS) and diphosphate, the first enzymatic step in sulfur assimilation pathway. APS synthesis involves the formation of a high-energy phosphoric-sulfuric acid anhydride bond driven by GTP hydrolysis by CysN coupled to ATP hydrolysis by CysD. The protein is Sulfate adenylyltransferase subunit 2 of Allorhizobium ampelinum (strain ATCC BAA-846 / DSM 112012 / S4) (Agrobacterium vitis (strain S4)).